The chain runs to 291 residues: Serine/threonine-protein phosphatase Pgam5, mitochondrial (291 aa).

Residues 7-23 form a helical membrane-spanning segment; the sequence is FACGTGAGLAAFYLQRL. The segment at 59 to 78 is disordered; the sequence is KSLVRPQKNEQPQEQNRYNS. The segment covering 67 to 77 has biased composition (polar residues); the sequence is NEQPQEQNRYN.

This sequence belongs to the phosphoglycerate mutase family. BPG-dependent PGAM subfamily. As to quaternary structure, interacts with Pk92B/ASK1.

It is found in the mitochondrion outer membrane. The enzyme catalyses O-phospho-L-seryl-[protein] + H2O = L-seryl-[protein] + phosphate. It catalyses the reaction O-phospho-L-threonyl-[protein] + H2O = L-threonyl-[protein] + phosphate. Functionally, displays phosphatase activity for serine/threonine residues, and dephosphorylates and activates Pk92B kinase. Has apparently no phosphoglycerate mutase activity. This Drosophila willistoni (Fruit fly) protein is Serine/threonine-protein phosphatase Pgam5, mitochondrial.